The sequence spans 294 residues: N-acetylmuramic acid 6-phosphate etherase (294 aa).

Residues 54-217 (VIQSFEEEGR…STASMIGVGK (164 aa)) form the SIS domain. The active-site Proton donor is the glutamate 82. Glutamate 113 is an active-site residue.

This sequence belongs to the GCKR-like family. MurNAc-6-P etherase subfamily. As to quaternary structure, homodimer.

It carries out the reaction N-acetyl-D-muramate 6-phosphate + H2O = N-acetyl-D-glucosamine 6-phosphate + (R)-lactate. It functions in the pathway amino-sugar metabolism; N-acetylmuramate degradation. Specifically catalyzes the cleavage of the D-lactyl ether substituent of MurNAc 6-phosphate, producing GlcNAc 6-phosphate and D-lactate. In Bacillus thuringiensis subsp. konkukian (strain 97-27), this protein is N-acetylmuramic acid 6-phosphate etherase.